Here is a 159-residue protein sequence, read N- to C-terminus: Ribonuclease H (159 aa).

The RNase H type-1 domain maps to T10 to E153. Mg(2+) is bound by residues D19, E57, D79, and D145.

It belongs to the RNase H family. In terms of assembly, monomer. Mg(2+) is required as a cofactor.

The protein resides in the cytoplasm. The enzyme catalyses Endonucleolytic cleavage to 5'-phosphomonoester.. Functionally, endonuclease that specifically degrades the RNA of RNA-DNA hybrids. The sequence is that of Ribonuclease H from Polaromonas sp. (strain JS666 / ATCC BAA-500).